The following is a 531-amino-acid chain: T-complex protein 1 subunit zeta (531 aa).

N-acetylalanine is present on A2. The residue at position 5 (K5) is an N6-acetyllysine. Position 39 (G39) interacts with ADP. Position 39 (G39) interacts with ATP. Residue D90 coordinates Mg(2+). ADP is bound by residues G91, T92, T93, S94, T158, and K159. Residues G91, T92, and T93 each contribute to the ATP site. K199 carries the N6-acetyllysine modification. S205 carries the phosphoserine modification. K251 participates in a covalent cross-link: Glycyl lysine isopeptide (Lys-Gly) (interchain with G-Cter in SUMO2). An N6-acetyllysine mark is found at K287, K365, K377, and K388. Position 411 (A411) interacts with ADP. The ATP site is built by A411, G412, D496, and K501. Position 496 (D496) interacts with ADP.

This sequence belongs to the TCP-1 chaperonin family. Component of the chaperonin-containing T-complex (TRiC), a hexadecamer composed of two identical back-to-back stacked rings enclosing a protein folding chamber. Each ring is made up of eight different subunits: TCP1/CCT1, CCT2, CCT3, CCT4, CCT5, CCT6A/CCT6, CCT7, CCT8. Interacts with PACRG.

The protein resides in the cytoplasm. It carries out the reaction ATP + H2O = ADP + phosphate + H(+). Functionally, component of the chaperonin-containing T-complex (TRiC), a molecular chaperone complex that assists the folding of actin, tubulin and other proteins upon ATP hydrolysis. The TRiC complex mediates the folding of WRAP53/TCAB1, thereby regulating telomere maintenance. This chain is T-complex protein 1 subunit zeta (CCT6), found in Pongo abelii (Sumatran orangutan).